Reading from the N-terminus, the 232-residue chain is Ribonuclease 3 (232 aa).

Positions 5-134 (QTVLKNHFAI…FLGALLLDKD (130 aa)) constitute an RNase III domain. E47 contributes to the Mg(2+) binding site. D51 is a catalytic residue. The Mg(2+) site is built by D120 and E123. Residue E123 is part of the active site. In terms of domain architecture, DRBM spans 160 to 229 (DYKTHLQELL…AKNAVEKGLD (70 aa)).

This sequence belongs to the ribonuclease III family. As to quaternary structure, homodimer. Mg(2+) serves as cofactor.

It localises to the cytoplasm. It carries out the reaction Endonucleolytic cleavage to 5'-phosphomonoester.. In terms of biological role, digests double-stranded RNA. Involved in the processing of primary rRNA transcript to yield the immediate precursors to the large and small rRNAs (23S and 16S). Processes some mRNAs, and tRNAs when they are encoded in the rRNA operon. Processes pre-crRNA and tracrRNA of type II CRISPR loci if present in the organism. In Streptococcus pneumoniae serotype 4 (strain ATCC BAA-334 / TIGR4), this protein is Ribonuclease 3.